Here is a 285-residue protein sequence, read N- to C-terminus: Pantothenate synthetase (285 aa).

Met30–His37 is an ATP binding site. The active-site Proton donor is His37. Residue Gln61 coordinates (R)-pantoate. Residue Gln61 coordinates beta-alanine. Residue Gly147–Asp150 coordinates ATP. A (R)-pantoate-binding site is contributed by Gln153. ATP contacts are provided by residues Val176 and Lys184–Arg187.

It belongs to the pantothenate synthetase family. Homodimer.

It is found in the cytoplasm. It carries out the reaction (R)-pantoate + beta-alanine + ATP = (R)-pantothenate + AMP + diphosphate + H(+). It participates in cofactor biosynthesis; (R)-pantothenate biosynthesis; (R)-pantothenate from (R)-pantoate and beta-alanine: step 1/1. Its function is as follows. Catalyzes the condensation of pantoate with beta-alanine in an ATP-dependent reaction via a pantoyl-adenylate intermediate. The sequence is that of Pantothenate synthetase from Listeria innocua serovar 6a (strain ATCC BAA-680 / CLIP 11262).